The sequence spans 346 residues: N-acetyl-gamma-glutamyl-phosphate reductase (346 aa).

Cys150 is a catalytic residue.

It belongs to the NAGSA dehydrogenase family. Type 1 subfamily.

The protein resides in the cytoplasm. The enzyme catalyses N-acetyl-L-glutamate 5-semialdehyde + phosphate + NADP(+) = N-acetyl-L-glutamyl 5-phosphate + NADPH + H(+). Its pathway is amino-acid biosynthesis; L-arginine biosynthesis; N(2)-acetyl-L-ornithine from L-glutamate: step 3/4. Catalyzes the NADPH-dependent reduction of N-acetyl-5-glutamyl phosphate to yield N-acetyl-L-glutamate 5-semialdehyde. This chain is N-acetyl-gamma-glutamyl-phosphate reductase, found in Lachnoclostridium phytofermentans (strain ATCC 700394 / DSM 18823 / ISDg) (Clostridium phytofermentans).